Here is a 342-residue protein sequence, read N- to C-terminus: MANITAKQVKELRETTGAGVMDAKKALVEAEGDMQRAIEIIHEKGEAKAAKKANRIAAEGLTGVYVDGNVAAIVEVNAETDFVAQNEQFKTLVNETAETIAKGKPANNEEALALTMPSGESLEEAYVNATATIGEKISFRRFAVLEKTDDQHFGAYQHNGGHIGVLTVVEGGDEALAKHIAMHIAAMSPKVLSYKELDPAFVREELAQLNHKIDQDNESRAMVNKPALPHLKYGSKAQLTDEVIAQAEEDIKAELKAEGKPEKIWDKIIPGKMARFMLDNTKVDQENTLLAQLYVMDDSKTVEQYLESVNASVVSFVRFEVGEGIEKKQEDFAAEVAAQMKN.

Residues 80-83 (TDFV) form an involved in Mg(2+) ion dislocation from EF-Tu region.

The protein belongs to the EF-Ts family.

Its subcellular location is the cytoplasm. In terms of biological role, associates with the EF-Tu.GDP complex and induces the exchange of GDP to GTP. It remains bound to the aminoacyl-tRNA.EF-Tu.GTP complex up to the GTP hydrolysis stage on the ribosome. In Lactobacillus delbrueckii subsp. bulgaricus (strain ATCC 11842 / DSM 20081 / BCRC 10696 / JCM 1002 / NBRC 13953 / NCIMB 11778 / NCTC 12712 / WDCM 00102 / Lb 14), this protein is Elongation factor Ts.